The sequence spans 189 residues: Elongation factor P (189 aa).

N6-(3,6-diaminohexanoyl)-5-hydroxylysine is present on Lys-34.

Belongs to the elongation factor P family. Post-translationally, may be beta-lysylated on the epsilon-amino group of Lys-34 by the combined action of EpmA and EpmB, and then hydroxylated on the C5 position of the same residue by EpmC (if this protein is present). Lysylation is critical for the stimulatory effect of EF-P on peptide-bond formation. The lysylation moiety may extend toward the peptidyltransferase center and stabilize the terminal 3-CCA end of the tRNA. Hydroxylation of the C5 position on Lys-34 may allow additional potential stabilizing hydrogen-bond interactions with the P-tRNA.

The protein localises to the cytoplasm. Its pathway is protein biosynthesis; polypeptide chain elongation. In terms of biological role, involved in peptide bond synthesis. Alleviates ribosome stalling that occurs when 3 or more consecutive Pro residues or the sequence PPG is present in a protein, possibly by augmenting the peptidyl transferase activity of the ribosome. Modification of Lys-34 is required for alleviation. This chain is Elongation factor P, found in Nitrosococcus oceani (strain ATCC 19707 / BCRC 17464 / JCM 30415 / NCIMB 11848 / C-107).